We begin with the raw amino-acid sequence, 138 residues long: Protein FAM136A (138 aa).

Alanine 2 bears the N-acetylalanine mark. A phosphothreonine mark is found at threonine 124 and threonine 126.

The protein belongs to the FAM136 family.

The sequence is that of Protein FAM136A (Fam136a) from Mus musculus (Mouse).